Reading from the N-terminus, the 353-residue chain is Thrombopoietin (353 aa).

The signal sequence occupies residues 1-21 (MELTELLLVVMLLLTARLTLS). The O-linked (GalNAc...) serine glycan is linked to S22. 2 disulfide bridges follow: C28–C172 and C50–C106. O-linked (GalNAc...) threonine glycans are attached at residues T58, T131, T179, and T180. S184 is a glycosylation site (O-linked (GalNAc...) serine). Residues N197 and N206 are each glycosylated (N-linked (GlcNAc...) (complex) asparagine). O-linked (GalNAc...) threonine glycosylation is present at T213. N-linked (GlcNAc...) (complex) asparagine glycans are attached at residues N234 and N255. The disordered stretch occupies residues 257-353 (TRGLFPGPSR…THSQNLSQEG (97 aa)). A glycan (O-linked (GalNAc...) serine) is linked at S265. Residues 275 to 304 (SSGTSDTGSLPPNLQPGYSPSPTHPPTGQY) are compositionally biased toward polar residues. Residues 324-335 (LPDPSAPTPTPT) show a composition bias toward pro residues. N-linked (GlcNAc...) asparagine glycans are attached at residues N340 and N348. Over residues 343 to 353 (YTHSQNLSQEG) the composition is skewed to polar residues.

This sequence belongs to the EPO/TPO family. Interacts with MPL/TPOR.

It is found in the secreted. Its function is as follows. Lineage-specific cytokine affecting the proliferation and maturation of megakaryocytes from their committed progenitor cells. It acts at a late stage of megakaryocyte development. It may be the major physiological regulator of circulating platelets. The protein is Thrombopoietin (THPO) of Homo sapiens (Human).